A 274-amino-acid chain; its full sequence is MQSLQQNIETAFEQRAAITPANVDATTRDAVNQVIAALDSGTLRVAEKINGEWVTHQWLKKAVLLSFRIADNQLIEGGETRFFDKVPMKFAGWDSERFQREGFRVVPPASVRQGAYIARNTVLMPSYVNIGAYVDESTMVDTWATVGSCAQIGKNVHLSGGAGIGGVLEPLQANPTIIEDNCFIGARSEMVEGVIVEEGSVISMGVFIGQSTKIYDRETGEVHYGRVPAGSVVVSGNLPSKDGRYSLYCAVIVKKVDAKTRGKVGINELLRTID.

Residues arginine 104 and aspartate 141 each coordinate substrate.

The protein belongs to the transferase hexapeptide repeat family. In terms of assembly, homotrimer.

The protein localises to the cytoplasm. The catalysed reaction is (S)-2,3,4,5-tetrahydrodipicolinate + succinyl-CoA + H2O = (S)-2-succinylamino-6-oxoheptanedioate + CoA. Its pathway is amino-acid biosynthesis; L-lysine biosynthesis via DAP pathway; LL-2,6-diaminopimelate from (S)-tetrahydrodipicolinate (succinylase route): step 1/3. The polypeptide is 2,3,4,5-tetrahydropyridine-2,6-dicarboxylate N-succinyltransferase (Sodalis glossinidius (strain morsitans)).